A 107-amino-acid polypeptide reads, in one-letter code: MINLQNKKLDIKEFLQELGFTVSLDYEREPMGVMFAEIHPIVSQVSNNSAIYQSFRTLEIELMVICTEETENSLYRAVQLLSDEHYIYANTITDNTNIIKLRGNYYD.

Seems to be involved in escape from killing mediated by the bacterial type III toxin-antitoxin module AbiQ toxin protein upon infection of L.lactis subsp. lactis strain IL1403. A single variant independently isolated from 5 different phage confers on the virus the ability to partially escape killing (i.e. the virus grows in the bacteria). The polypeptide is Gene product 19 (Lactococcus (lactic streptococci)).